Reading from the N-terminus, the 348-residue chain is NADH-ubiquinone oxidoreductase chain 2 (348 aa).

Helical transmembrane passes span 1–21 (MSPYITASLLFGLLLGPTITA), 60–80 (FLTQATAAAMLLFASTTNAWL), 96–116 (TLIILALALKIGLAPLHTWLP), 149–169 (NPTLLVILGVLSTLIGGWGGL), 177–194 (ILAYSSIAHLGWMILILQ), 198–220 (TLTLLTLMLYLIMTSSAFLTFIL), 238–258 (ILTSLLPLVLLSLGGLPPLTG), 273–293 (DLAPTATLAALSALLSLYFYL), and 328–348 (MAASSILLLPMTPGILTLFNI).

It belongs to the complex I subunit 2 family.

The protein resides in the mitochondrion inner membrane. The enzyme catalyses a ubiquinone + NADH + 5 H(+)(in) = a ubiquinol + NAD(+) + 4 H(+)(out). In terms of biological role, core subunit of the mitochondrial membrane respiratory chain NADH dehydrogenase (Complex I) that is believed to belong to the minimal assembly required for catalysis. Complex I functions in the transfer of electrons from NADH to the respiratory chain. The immediate electron acceptor for the enzyme is believed to be ubiquinone. The sequence is that of NADH-ubiquinone oxidoreductase chain 2 (MT-ND2) from Tetraodon nigroviridis (Spotted green pufferfish).